The following is a 171-amino-acid chain: Squamosa promoter-binding protein 2 (171 aa).

2 disordered regions span residues 20–46 (GDEG…VVKV) and 57–76 (KLNL…TASG). The segment covering 22–40 (EGSDFEEEEEGEDEEEEEQ) has biased composition (acidic residues). An SBP-type zinc finger spans residues 82-159 (QPCCLVENCG…AGHNERRRKS (78 aa)). The Zn(2+) site is built by C85, C90, C107, H110, C126, C129, H133, and C145. A Bipartite nuclear localization signal motif is present at residues 142-158 (KRSCRRRLAGHNERRRK). Basic residues predominate over residues 149 to 158 (LAGHNERRRK). A disordered region spans residues 149 to 171 (LAGHNERRRKSSLESHKEGRSPR). The segment covering 159 to 171 (SSLESHKEGRSPR) has biased composition (basic and acidic residues).

The protein resides in the nucleus. In terms of biological role, probable transcriptional factor. Binds to the promoter of the SQUAMOSA gene. This Antirrhinum majus (Garden snapdragon) protein is Squamosa promoter-binding protein 2 (SBP2).